The primary structure comprises 526 residues: Peptide chain release factor 3 (526 aa).

The tr-type G domain maps to 9-277; it reads DKRRTFAIIS…GIVEWAPIPQ (269 aa). Residues 18–25, 86–90, and 140–143 contribute to the GTP site; these read SHPDAGKT, DTPGH, and NKLD.

It belongs to the TRAFAC class translation factor GTPase superfamily. Classic translation factor GTPase family. PrfC subfamily.

It localises to the cytoplasm. Functionally, increases the formation of ribosomal termination complexes and stimulates activities of RF-1 and RF-2. It binds guanine nucleotides and has strong preference for UGA stop codons. It may interact directly with the ribosome. The stimulation of RF-1 and RF-2 is significantly reduced by GTP and GDP, but not by GMP. The polypeptide is Peptide chain release factor 3 (Shewanella halifaxensis (strain HAW-EB4)).